We begin with the raw amino-acid sequence, 310 residues long: N-acetyl-gamma-glutamyl-phosphate reductase (310 aa).

Residue cysteine 117 is part of the active site.

This sequence belongs to the NAGSA dehydrogenase family. Type 2 subfamily.

Its subcellular location is the cytoplasm. It carries out the reaction N-acetyl-L-glutamate 5-semialdehyde + phosphate + NADP(+) = N-acetyl-L-glutamyl 5-phosphate + NADPH + H(+). It participates in amino-acid biosynthesis; L-arginine biosynthesis; N(2)-acetyl-L-ornithine from L-glutamate: step 3/4. In terms of biological role, catalyzes the NADPH-dependent reduction of N-acetyl-5-glutamyl phosphate to yield N-acetyl-L-glutamate 5-semialdehyde. This chain is N-acetyl-gamma-glutamyl-phosphate reductase, found in Rhizobium johnstonii (strain DSM 114642 / LMG 32736 / 3841) (Rhizobium leguminosarum bv. viciae).